The chain runs to 63 residues: Cecropin-C (63 aa).

The first 23 residues, Met-1 to Ala-23, serve as a signal peptide directing secretion. Arg-62 carries the post-translational modification Arginine amide.

It belongs to the cecropin family.

Its subcellular location is the secreted. Functionally, cecropins have lytic and antibacterial activity against several Gram-positive and Gram-negative bacteria. The chain is Cecropin-C (CecC) from Drosophila mauritiana (Fruit fly).